The primary structure comprises 305 residues: MQLGIILKGIGGFYYVKQEKTEDIFECKPRGVFRKNSVTPLPGDRVGFSIIDGDKKLGNIDEILPRSSELVRPAVANVDQIAIIVAAKAPNPDYMLLDKLLITAETRNIRVLICVNKIDLDDDTAKIVRNAYSPAGYDVIEISSVRNIGYKRLKEELKGHITVFAGQSGVGKSTILNHIMESWVMETGSVSNKIERGKHTTRHAELLELKYGGYVADTPGFSSFEIIDIPYNQLERYYPEFLPYINTCRFNSCSHITEPGCRVIEALERSEIDNNRYQRYIQLYKALKDIPQYKGKKTESRRVIK.

Residues 67–224 (SSELVRPAVA…VADTPGFSSF (158 aa)) form the CP-type G domain. GTP contacts are provided by residues 116 to 119 (NKID) and 166 to 174 (GQSGVGKST). Cys-248, Cys-253, His-255, and Cys-261 together coordinate Zn(2+).

It belongs to the TRAFAC class YlqF/YawG GTPase family. RsgA subfamily. As to quaternary structure, monomer. Associates with 30S ribosomal subunit, binds 16S rRNA. Zn(2+) is required as a cofactor.

It localises to the cytoplasm. In terms of biological role, one of several proteins that assist in the late maturation steps of the functional core of the 30S ribosomal subunit. Helps release RbfA from mature subunits. May play a role in the assembly of ribosomal proteins into the subunit. Circularly permuted GTPase that catalyzes slow GTP hydrolysis, GTPase activity is stimulated by the 30S ribosomal subunit. The polypeptide is Small ribosomal subunit biogenesis GTPase RsgA (Ruminiclostridium cellulolyticum (strain ATCC 35319 / DSM 5812 / JCM 6584 / H10) (Clostridium cellulolyticum)).